The primary structure comprises 305 residues: Plant-type L-asparaginase (305 aa).

Threonine 175 (nucleophile) is an active-site residue. Residues 202 to 205 (RVGD) and 224 to 227 (TGLG) contribute to the substrate site.

The protein belongs to the Ntn-hydrolase family. As to quaternary structure, heterotetramer of two alpha and two beta chains arranged as a dimer of alpha/beta heterodimers. The uncleaved protein forms homodimers. Autocleaved. Generates the alpha and beta subunits. The N-terminal residue of the beta subunit is thought to be responsible for the nucleophile hydrolase activity.

It carries out the reaction L-asparagine + H2O = L-aspartate + NH4(+). Functionally, catalyzes the hydrolysis of L-asparagine into L-aspartate and ammonia. Does not exhibit glutaminase activity. This Pyrococcus abyssi (strain GE5 / Orsay) protein is Plant-type L-asparaginase.